A 360-amino-acid polypeptide reads, in one-letter code: MADLEDLKTALLSDIAAAADESALEAVRVASLGKKGSISALLSGLGKMSPDERKTEGAAINALKDAVNTALSARRGVLKDAALEARLANETLDVTLPVRPQGAAAGRIHPISQVMDELAEIFADMGFSIAEGPDIETDDYNFTKLNFPPDHPARDMHDTFFFHPDKHGRRKVLRTHTSPVQVRTMLAQKPPIRVICPGRTYRCDSDQTHTPMFHQVEGLVIDRSSNLGHLKWILEEFLKAFFETSTVNLRFRPSYFPFTEPSMEVDVQCSRKDGEIRFGEGSDWLEILGCGMVHPNVLRNCGLDPEIFQGFAWGIGIDRLAMLKYGMPDLRAFFEADVRWLKHYGFRPLDFPSLASGLSP.

Position 260 (Glu-260) interacts with Mg(2+).

It belongs to the class-II aminoacyl-tRNA synthetase family. Phe-tRNA synthetase alpha subunit type 1 subfamily. In terms of assembly, tetramer of two alpha and two beta subunits. It depends on Mg(2+) as a cofactor.

The protein localises to the cytoplasm. It catalyses the reaction tRNA(Phe) + L-phenylalanine + ATP = L-phenylalanyl-tRNA(Phe) + AMP + diphosphate + H(+). This is Phenylalanine--tRNA ligase alpha subunit from Methylocella silvestris (strain DSM 15510 / CIP 108128 / LMG 27833 / NCIMB 13906 / BL2).